We begin with the raw amino-acid sequence, 250 residues long: Acetylglutamate kinase (250 aa).

Substrate-binding positions include Gly-41 to Gly-42, Arg-63, and Asn-156.

Belongs to the acetylglutamate kinase family. ArgB subfamily.

The protein localises to the cytoplasm. It catalyses the reaction N-acetyl-L-glutamate + ATP = N-acetyl-L-glutamyl 5-phosphate + ADP. It participates in amino-acid biosynthesis; L-arginine biosynthesis; N(2)-acetyl-L-ornithine from L-glutamate: step 2/4. Functionally, catalyzes the ATP-dependent phosphorylation of N-acetyl-L-glutamate. The protein is Acetylglutamate kinase of Listeria welshimeri serovar 6b (strain ATCC 35897 / DSM 20650 / CCUG 15529 / CIP 8149 / NCTC 11857 / SLCC 5334 / V8).